A 223-amino-acid polypeptide reads, in one-letter code: Ras-related protein RABA4c (223 aa).

A GTP-binding site is contributed by 22–29 (GDSAVGKS). The Effector region signature appears at 44 to 52 (SKATIGVEF). Residues 70–74 (DTAGQ), 128–131 (NKTD), and 158–159 (SA) each bind GTP. Residues Cys-219 and Cys-220 are each lipidated (S-geranylgeranyl cysteine).

Belongs to the small GTPase superfamily. Rab family.

It localises to the cell membrane. In terms of biological role, intracellular vesicle trafficking and protein transport. The protein is Ras-related protein RABA4c (RABA4C) of Arabidopsis thaliana (Mouse-ear cress).